Reading from the N-terminus, the 290-residue chain is ATP synthase gamma chain (290 aa).

Belongs to the ATPase gamma chain family. In terms of assembly, F-type ATPases have 2 components, CF(1) - the catalytic core - and CF(0) - the membrane proton channel. CF(1) has five subunits: alpha(3), beta(3), gamma(1), delta(1), epsilon(1). CF(0) has three main subunits: a, b and c.

It is found in the cell membrane. Functionally, produces ATP from ADP in the presence of a proton gradient across the membrane. The gamma chain is believed to be important in regulating ATPase activity and the flow of protons through the CF(0) complex. This chain is ATP synthase gamma chain, found in Buchnera aphidicola subsp. Acyrthosiphon pisum (strain 5A).